The following is a 178-amino-acid chain: Protein GrpE (178 aa).

The protein belongs to the GrpE family. In terms of assembly, homodimer.

The protein localises to the cytoplasm. Participates actively in the response to hyperosmotic and heat shock by preventing the aggregation of stress-denatured proteins, in association with DnaK and GrpE. It is the nucleotide exchange factor for DnaK and may function as a thermosensor. Unfolded proteins bind initially to DnaJ; upon interaction with the DnaJ-bound protein, DnaK hydrolyzes its bound ATP, resulting in the formation of a stable complex. GrpE releases ADP from DnaK; ATP binding to DnaK triggers the release of the substrate protein, thus completing the reaction cycle. Several rounds of ATP-dependent interactions between DnaJ, DnaK and GrpE are required for fully efficient folding. In Rickettsia typhi (strain ATCC VR-144 / Wilmington), this protein is Protein GrpE.